Consider the following 30-residue polypeptide: Cyclotide hyen-G (30 aa).

The cyclopeptide (Gly-Asp) cross-link spans 1 to 30; it reads GLPCGESCVYIPCISTVLGCSCSNKVCYRD. Intrachain disulfides connect cysteine 4-cysteine 20, cysteine 8-cysteine 22, and cysteine 13-cysteine 27.

This is a cyclic peptide. As to expression, detected in stems (at protein level).

In terms of biological role, probably participates in a plant defense mechanism. This is Cyclotide hyen-G from Pigea enneasperma (Spade flower).